Here is a 178-residue protein sequence, read N- to C-terminus: Peptide deformylase (178 aa).

Positions 96 and 138 each coordinate Fe cation. Glu-139 is an active-site residue. Residue His-142 participates in Fe cation binding.

This sequence belongs to the polypeptide deformylase family. Fe(2+) serves as cofactor.

The enzyme catalyses N-terminal N-formyl-L-methionyl-[peptide] + H2O = N-terminal L-methionyl-[peptide] + formate. Its function is as follows. Removes the formyl group from the N-terminal Met of newly synthesized proteins. Requires at least a dipeptide for an efficient rate of reaction. N-terminal L-methionine is a prerequisite for activity but the enzyme has broad specificity at other positions. This chain is Peptide deformylase, found in Bartonella tribocorum (strain CIP 105476 / IBS 506).